The sequence spans 220 residues: Cytidylate kinase (220 aa).

Residue 10 to 18 (GPAGAGKST) participates in ATP binding.

This sequence belongs to the cytidylate kinase family. Type 1 subfamily.

The protein localises to the cytoplasm. It carries out the reaction CMP + ATP = CDP + ADP. The enzyme catalyses dCMP + ATP = dCDP + ADP. This Alkaliphilus metalliredigens (strain QYMF) protein is Cytidylate kinase.